An 85-amino-acid polypeptide reads, in one-letter code: Protein MANBAL (85 aa).

A helical transmembrane segment spans residues 24–44 (YGLFLGAIFQLICVLAIIVPI). Residues 49–64 (EAEAEQAEPRSAEGPK) show a composition bias toward basic and acidic residues. A disordered region spans residues 49 to 85 (EAEAEQAEPRSAEGPKKPKAAIASTNKRPKKETKKKR). The segment covering 75–85 (KRPKKETKKKR) has biased composition (basic residues).

The protein belongs to the UPF0239 family.

The protein resides in the membrane. The polypeptide is Protein MANBAL (Manbal) (Mus musculus (Mouse)).